Consider the following 150-residue polypeptide: Large ribosomal subunit protein bL9 (150 aa).

Belongs to the bacterial ribosomal protein bL9 family.

Its function is as follows. Binds to the 23S rRNA. The polypeptide is Large ribosomal subunit protein bL9 (Enterococcus faecalis (strain ATCC 700802 / V583)).